The chain runs to 321 residues: Methionyl-tRNA formyltransferase (321 aa).

(6S)-5,6,7,8-tetrahydrofolate is bound at residue 112–115; the sequence is SILP.

This sequence belongs to the Fmt family.

The catalysed reaction is L-methionyl-tRNA(fMet) + (6R)-10-formyltetrahydrofolate = N-formyl-L-methionyl-tRNA(fMet) + (6S)-5,6,7,8-tetrahydrofolate + H(+). In terms of biological role, attaches a formyl group to the free amino group of methionyl-tRNA(fMet). The formyl group appears to play a dual role in the initiator identity of N-formylmethionyl-tRNA by promoting its recognition by IF2 and preventing the misappropriation of this tRNA by the elongation apparatus. The protein is Methionyl-tRNA formyltransferase of Shewanella piezotolerans (strain WP3 / JCM 13877).